The chain runs to 621 residues: UvrABC system protein C (621 aa).

Residues T20–V98 form the GIY-YIG domain. One can recognise a UVR domain in the interval D207–M242.

Belongs to the UvrC family. In terms of assembly, interacts with UvrB in an incision complex.

The protein resides in the cytoplasm. Its function is as follows. The UvrABC repair system catalyzes the recognition and processing of DNA lesions. UvrC both incises the 5' and 3' sides of the lesion. The N-terminal half is responsible for the 3' incision and the C-terminal half is responsible for the 5' incision. In Xylella fastidiosa (strain Temecula1 / ATCC 700964), this protein is UvrABC system protein C.